The following is a 155-amino-acid chain: Small ribosomal subunit protein uS7 (155 aa).

This sequence belongs to the universal ribosomal protein uS7 family. As to quaternary structure, part of the 30S ribosomal subunit. Contacts proteins S9 and S11.

In terms of biological role, one of the primary rRNA binding proteins, it binds directly to 16S rRNA where it nucleates assembly of the head domain of the 30S subunit. Is located at the subunit interface close to the decoding center, probably blocks exit of the E-site tRNA. The protein is Small ribosomal subunit protein uS7 of Petrotoga mobilis (strain DSM 10674 / SJ95).